A 234-amino-acid polypeptide reads, in one-letter code: Ubiquitin carboxyl-terminal hydrolase 3 (234 aa).

In terms of domain architecture, UCH catalytic spans 12-232; sequence RWLPLESNPD…LNFNLIAISK (221 aa). The active-site Nucleophile is the C101. The Proton donor role is filled by H172.

Belongs to the peptidase C12 family.

It catalyses the reaction Thiol-dependent hydrolysis of ester, thioester, amide, peptide and isopeptide bonds formed by the C-terminal Gly of ubiquitin (a 76-residue protein attached to proteins as an intracellular targeting signal).. The chain is Ubiquitin carboxyl-terminal hydrolase 3 from Arabidopsis thaliana (Mouse-ear cress).